The primary structure comprises 240 residues: Cell division control protein 14 (240 aa).

In terms of assembly, interacts with sid1.

The protein localises to the cytoplasm. It is found in the cytoskeleton. The protein resides in the microtubule organizing center. It localises to the spindle pole body. Its function is as follows. Has a role in the septation initiation network (SIN) required for cytokinesis. This is Cell division control protein 14 (cdc14) from Schizosaccharomyces pombe (strain 972 / ATCC 24843) (Fission yeast).